A 262-amino-acid chain; its full sequence is Acetylglutamate kinase (262 aa).

Substrate contacts are provided by residues 46 to 47, Arg-68, and Asn-160; that span reads GG.

Belongs to the acetylglutamate kinase family. ArgB subfamily.

The protein localises to the cytoplasm. It carries out the reaction N-acetyl-L-glutamate + ATP = N-acetyl-L-glutamyl 5-phosphate + ADP. The protein operates within amino-acid biosynthesis; L-arginine biosynthesis; N(2)-acetyl-L-ornithine from L-glutamate: step 2/4. Catalyzes the ATP-dependent phosphorylation of N-acetyl-L-glutamate. The sequence is that of Acetylglutamate kinase from Shewanella amazonensis (strain ATCC BAA-1098 / SB2B).